Here is a 237-residue protein sequence, read N- to C-terminus: Phosphatidylserine decarboxylase proenzyme (237 aa).

Ser-206 functions as the Schiff-base intermediate with substrate; via pyruvic acid in the catalytic mechanism. Pyruvic acid (Ser); by autocatalysis is present on Ser-206.

The protein belongs to the phosphatidylserine decarboxylase family. PSD-A subfamily. In terms of assembly, heterodimer of a large membrane-associated beta subunit and a small pyruvoyl-containing alpha subunit. Pyruvate is required as a cofactor. Post-translationally, is synthesized initially as an inactive proenzyme. Formation of the active enzyme involves a self-maturation process in which the active site pyruvoyl group is generated from an internal serine residue via an autocatalytic post-translational modification. Two non-identical subunits are generated from the proenzyme in this reaction, and the pyruvate is formed at the N-terminus of the alpha chain, which is derived from the carboxyl end of the proenzyme. The post-translation cleavage follows an unusual pathway, termed non-hydrolytic serinolysis, in which the side chain hydroxyl group of the serine supplies its oxygen atom to form the C-terminus of the beta chain, while the remainder of the serine residue undergoes an oxidative deamination to produce ammonia and the pyruvoyl prosthetic group on the alpha chain.

It localises to the cell membrane. It catalyses the reaction a 1,2-diacyl-sn-glycero-3-phospho-L-serine + H(+) = a 1,2-diacyl-sn-glycero-3-phosphoethanolamine + CO2. It participates in phospholipid metabolism; phosphatidylethanolamine biosynthesis; phosphatidylethanolamine from CDP-diacylglycerol: step 2/2. Catalyzes the formation of phosphatidylethanolamine (PtdEtn) from phosphatidylserine (PtdSer). This is Phosphatidylserine decarboxylase proenzyme from Nocardia farcinica (strain IFM 10152).